The chain runs to 396 residues: Acetylornithine aminotransferase 2 (396 aa).

Pyridoxal 5'-phosphate contacts are provided by residues Gly102–Ala103 and Phe134. Residue Arg137 participates in N(2)-acetyl-L-ornithine binding. Asp219–Gln222 lines the pyridoxal 5'-phosphate pocket. The residue at position 248 (Lys248) is an N6-(pyridoxal phosphate)lysine. Thr276 is a binding site for pyridoxal 5'-phosphate.

This sequence belongs to the class-III pyridoxal-phosphate-dependent aminotransferase family. ArgD subfamily. In terms of assembly, homodimer. Pyridoxal 5'-phosphate is required as a cofactor.

The protein localises to the cytoplasm. The enzyme catalyses N(2)-acetyl-L-ornithine + 2-oxoglutarate = N-acetyl-L-glutamate 5-semialdehyde + L-glutamate. The protein operates within amino-acid biosynthesis; L-arginine biosynthesis; N(2)-acetyl-L-ornithine from L-glutamate: step 4/4. This is Acetylornithine aminotransferase 2 from Bordetella parapertussis (strain 12822 / ATCC BAA-587 / NCTC 13253).